A 161-amino-acid polypeptide reads, in one-letter code: Large ribosomal subunit protein uL16 (161 aa).

The protein belongs to the universal ribosomal protein uL16 family.

In Methanosphaera stadtmanae (strain ATCC 43021 / DSM 3091 / JCM 11832 / MCB-3), this protein is Large ribosomal subunit protein uL16.